Reading from the N-terminus, the 1819-residue chain is U3 small nucleolar RNA-associated protein 10 (1819 aa).

An HEAT 1 repeat occupies 583-620 (LDFQAILPFLLVALADPSERIRREAAAALAAIGGIYKK). A run of 2 helical transmembrane segments spans residues 945-965 (IQSG…AIVN) and 1001-1021 (ALLL…HSVM). HEAT repeat units follow at residues 1045-1082 (QTID…AFEH), 1269-1306 (LTLV…QNPE), 1313-1351 (IRVL…KYGK), and 1775-1812 (ALLP…VLGE).

It belongs to the HEATR1/UTP10 family. Component of the ribosomal small subunit (SSU) processome.

It localises to the nucleus. Its subcellular location is the nucleolus. The protein resides in the membrane. Functionally, involved in nucleolar processing of pre-18S ribosomal RNA. Involved in ribosome biosynthesis. The protein is U3 small nucleolar RNA-associated protein 10 of Aspergillus clavatus (strain ATCC 1007 / CBS 513.65 / DSM 816 / NCTC 3887 / NRRL 1 / QM 1276 / 107).